We begin with the raw amino-acid sequence, 739 residues long: Phosphoribosylformylglycinamidine synthase subunit PurL (739 aa).

The active site involves His54. Positions 57 and 96 each coordinate ATP. Position 98 (Glu98) interacts with Mg(2+). Substrate contacts are provided by residues 99–102 (SHNH) and Arg121. His100 functions as the Proton acceptor in the catalytic mechanism. Mg(2+) is bound at residue Asp122. A substrate-binding site is contributed by Gln245. Residue Asp273 participates in Mg(2+) binding. 317–319 (ESQ) serves as a coordination point for substrate. 2 residues coordinate ATP: Asp500 and Gly537. Asn538 is a Mg(2+) binding site. Ser540 contacts substrate.

This sequence belongs to the FGAMS family. Monomer. Part of the FGAM synthase complex composed of 1 PurL, 1 PurQ and 2 PurS subunits.

It localises to the cytoplasm. It catalyses the reaction N(2)-formyl-N(1)-(5-phospho-beta-D-ribosyl)glycinamide + L-glutamine + ATP + H2O = 2-formamido-N(1)-(5-O-phospho-beta-D-ribosyl)acetamidine + L-glutamate + ADP + phosphate + H(+). It participates in purine metabolism; IMP biosynthesis via de novo pathway; 5-amino-1-(5-phospho-D-ribosyl)imidazole from N(2)-formyl-N(1)-(5-phospho-D-ribosyl)glycinamide: step 1/2. Its function is as follows. Part of the phosphoribosylformylglycinamidine synthase complex involved in the purines biosynthetic pathway. Catalyzes the ATP-dependent conversion of formylglycinamide ribonucleotide (FGAR) and glutamine to yield formylglycinamidine ribonucleotide (FGAM) and glutamate. The FGAM synthase complex is composed of three subunits. PurQ produces an ammonia molecule by converting glutamine to glutamate. PurL transfers the ammonia molecule to FGAR to form FGAM in an ATP-dependent manner. PurS interacts with PurQ and PurL and is thought to assist in the transfer of the ammonia molecule from PurQ to PurL. The sequence is that of Phosphoribosylformylglycinamidine synthase subunit PurL from Bacillus cereus (strain ZK / E33L).